The chain runs to 156 residues: Ribonuclease 1B pancreatic (156 aa).

Residues 1-28 (MALDKSVIPLPLLVVVLLVLGWAQPSLG) form the signal peptide. Residues Lys35 and Arg38 each contribute to the substrate site. His40 (proton acceptor) is an active-site residue. 4 disulfides stabilise this stretch: Cys54–Cys112, Cys68–Cys123, Cys86–Cys138, and Cys93–Cys100. N-linked (GlcNAc...) asparagine glycosylation occurs at Asn62. Substrate-binding positions include 69 to 73 (KSVNT), Lys94, and Arg113. Asn116 is a glycosylation site (N-linked (GlcNAc...) asparagine). Catalysis depends on His147, which acts as the Proton donor.

It belongs to the pancreatic ribonuclease family. Monomer.

It localises to the secreted. It catalyses the reaction an [RNA] containing cytidine + H2O = an [RNA]-3'-cytidine-3'-phosphate + a 5'-hydroxy-ribonucleotide-3'-[RNA].. The catalysed reaction is an [RNA] containing uridine + H2O = an [RNA]-3'-uridine-3'-phosphate + a 5'-hydroxy-ribonucleotide-3'-[RNA].. Its function is as follows. Endonuclease that catalyzes the cleavage of RNA on the 3' side of pyrimidine nucleotides. Compared to RNASE1 it has lost activity towards dsRNA. In Pygathrix nemaeus (Red-shanked douc langur), this protein is Ribonuclease 1B pancreatic (RNASE1B).